A 319-amino-acid polypeptide reads, in one-letter code: NADH-quinone oxidoreductase subunit H 1 (319 aa).

The next 8 membrane-spanning stretches (helical) occupy residues 8-28, 74-94, 107-127, 147-167, 179-199, 230-250, 258-278, and 297-317; these read LFNIFGILGTLLTLAALLIWI, LVFILAPTVVVIATLLAFAVI, IGLLFFLAMSSLSVYSVVLGG, LSYEVFMGLSLMGVVMLAGTF, MWFCIPQFLGLVVFLIAGIAE, FFVGEYLAILLISALIVTLFF, LPPLVWFFIKFSFFVLFFILL, and LMLPLALLNLVITGAVVLALD.

Belongs to the complex I subunit 1 family. NDH-1 is composed of 14 different subunits. Subunits NuoA, H, J, K, L, M, N constitute the membrane sector of the complex.

It localises to the cell inner membrane. It catalyses the reaction a quinone + NADH + 5 H(+)(in) = a quinol + NAD(+) + 4 H(+)(out). In terms of biological role, NDH-1 shuttles electrons from NADH, via FMN and iron-sulfur (Fe-S) centers, to quinones in the respiratory chain. The immediate electron acceptor for the enzyme in this species is believed to be ubiquinone. Couples the redox reaction to proton translocation (for every two electrons transferred, four hydrogen ions are translocated across the cytoplasmic membrane), and thus conserves the redox energy in a proton gradient. This subunit may bind ubiquinone. The protein is NADH-quinone oxidoreductase subunit H 1 of Nitrosococcus oceani (strain ATCC 19707 / BCRC 17464 / JCM 30415 / NCIMB 11848 / C-107).